We begin with the raw amino-acid sequence, 348 residues long: Dihydroorotase (348 aa).

2 residues coordinate Zn(2+): His-14 and His-16. Substrate contacts are provided by residues 16–18 (HLR) and Asn-42. Positions 100, 137, and 175 each coordinate Zn(2+). Lys-100 is subject to N6-carboxylysine. Residue His-137 participates in substrate binding. A substrate-binding site is contributed by Leu-220. Residue Asp-248 coordinates Zn(2+). Asp-248 is a catalytic residue. 2 residues coordinate substrate: His-252 and Ala-264.

It belongs to the metallo-dependent hydrolases superfamily. DHOase family. Class II DHOase subfamily. Homodimer. Zn(2+) serves as cofactor.

The catalysed reaction is (S)-dihydroorotate + H2O = N-carbamoyl-L-aspartate + H(+). It participates in pyrimidine metabolism; UMP biosynthesis via de novo pathway; (S)-dihydroorotate from bicarbonate: step 3/3. In terms of biological role, catalyzes the reversible cyclization of carbamoyl aspartate to dihydroorotate. The sequence is that of Dihydroorotase from Pseudomonas aeruginosa (strain ATCC 15692 / DSM 22644 / CIP 104116 / JCM 14847 / LMG 12228 / 1C / PRS 101 / PAO1).